Here is a 463-residue protein sequence, read N- to C-terminus: Ribosomal protein uS12 methylthiotransferase RimO (463 aa).

In terms of domain architecture, MTTase N-terminal spans 15–130 (PKVGFVSLGC…VMQAVHSHLP (116 aa)). [4Fe-4S] cluster contacts are provided by cysteine 24, cysteine 60, cysteine 89, cysteine 161, cysteine 165, and cysteine 168. Residues 147–392 (LTPRHYAYLK…MEVAEQVSAK (246 aa)) enclose the Radical SAM core domain. Residues 395 to 463 (ARKVGKTLKV…ADGHDLWGEV (69 aa)) enclose the TRAM domain.

Belongs to the methylthiotransferase family. RimO subfamily. It depends on [4Fe-4S] cluster as a cofactor.

Its subcellular location is the cytoplasm. It catalyses the reaction L-aspartate(89)-[ribosomal protein uS12]-hydrogen + (sulfur carrier)-SH + AH2 + 2 S-adenosyl-L-methionine = 3-methylsulfanyl-L-aspartate(89)-[ribosomal protein uS12]-hydrogen + (sulfur carrier)-H + 5'-deoxyadenosine + L-methionine + A + S-adenosyl-L-homocysteine + 2 H(+). In terms of biological role, catalyzes the methylthiolation of an aspartic acid residue of ribosomal protein uS12. In Paraburkholderia phymatum (strain DSM 17167 / CIP 108236 / LMG 21445 / STM815) (Burkholderia phymatum), this protein is Ribosomal protein uS12 methylthiotransferase RimO.